The primary structure comprises 315 residues: Olfactory receptor 3A1 (315 aa).

Topologically, residues M1–P28 are extracellular. N8 carries an N-linked (GlcNAc...) asparagine glycan. Residues V29–V52 traverse the membrane as a helical segment. The Cytoplasmic segment spans residues L53–T60. Residues P61–P82 traverse the membrane as a helical segment. Topologically, residues S83–Q103 are extracellular. An intrachain disulfide couples C100 to C192. A helical membrane pass occupies residues L104–Y123. Residues D124 to V143 are Cytoplasmic-facing. A helical membrane pass occupies residues Q144 to T161. Topologically, residues H162–E199 are extracellular. The chain crosses the membrane as a helical span at residues L200–H223. Residues V224–A240 are Cytoplasmic-facing. A helical transmembrane segment spans residues F241 to R264. At L265–K275 the chain is on the extracellular side. A helical membrane pass occupies residues A276–F295. The Cytoplasmic segment spans residues R296 to A315.

The protein belongs to the G-protein coupled receptor 1 family.

It localises to the cell membrane. In terms of biological role, odorant receptor. The sequence is that of Olfactory receptor 3A1 (OR3A1) from Homo sapiens (Human).